The chain runs to 624 residues: (-)-beta-phellandrene synthase 2, chloroplastic (624 aa).

Residues 1–48 (MAIVSSVPLASKSCLHKSLISSIHKLKPFCRTIPTLGMSRPGKYVMPS) constitute a chloroplast transit peptide. 3 residues coordinate Mg(2+): aspartate 375, aspartate 379, and aspartate 527. A DDXXD motif motif is present at residues 375 to 379 (DDMYD).

It belongs to the terpene synthase family. Tpsd subfamily. Mg(2+) is required as a cofactor. It depends on Mn(2+) as a cofactor.

It localises to the plastid. Its subcellular location is the chloroplast. The enzyme catalyses (2E)-geranyl diphosphate = (-)-beta-phellandrene + diphosphate. It functions in the pathway terpene metabolism; oleoresin biosynthesis. Terpene synthase (TPS) involved in the biosynthesis of monoterpene natural products included in conifer oleoresin secretions and volatile emissions; these compounds contribute to biotic and abiotic stress defense against herbivores and pathogens. Catalyzes the conversion of (2E)-geranyl diphosphate (GPP) to (-)-beta-phellandrene. The sequence is that of (-)-beta-phellandrene synthase 2, chloroplastic from Picea sitchensis (Sitka spruce).